The following is a 487-amino-acid chain: Protein nucleotidyltransferase YdiU (487 aa).

8 residues coordinate ATP: G90, G92, R93, K113, D125, G126, R176, and R183. The Proton acceptor role is filled by D252. Residues N253 and D262 each coordinate Mg(2+). D262 is a binding site for ATP.

This sequence belongs to the SELO family. Mg(2+) is required as a cofactor. It depends on Mn(2+) as a cofactor.

It catalyses the reaction L-seryl-[protein] + ATP = 3-O-(5'-adenylyl)-L-seryl-[protein] + diphosphate. It carries out the reaction L-threonyl-[protein] + ATP = 3-O-(5'-adenylyl)-L-threonyl-[protein] + diphosphate. The enzyme catalyses L-tyrosyl-[protein] + ATP = O-(5'-adenylyl)-L-tyrosyl-[protein] + diphosphate. The catalysed reaction is L-histidyl-[protein] + UTP = N(tele)-(5'-uridylyl)-L-histidyl-[protein] + diphosphate. It catalyses the reaction L-seryl-[protein] + UTP = O-(5'-uridylyl)-L-seryl-[protein] + diphosphate. It carries out the reaction L-tyrosyl-[protein] + UTP = O-(5'-uridylyl)-L-tyrosyl-[protein] + diphosphate. Functionally, nucleotidyltransferase involved in the post-translational modification of proteins. It can catalyze the addition of adenosine monophosphate (AMP) or uridine monophosphate (UMP) to a protein, resulting in modifications known as AMPylation and UMPylation. This is Protein nucleotidyltransferase YdiU from Pseudomonas fluorescens (strain SBW25).